The sequence spans 267 residues: MGGPDPDVPDLDVPDPALLRQGYRAGRLEPEHLAPTWVEQFAAWFIDAATPGVGVPEANAAVFATASAAGRPSARTVLLKGFDQRGFVIYTNYASRKGREATENPFGSLVFPWYALERQVVVIGSIERVSRAETERYFQSRPHGSQLGAWASHQSTIIESRTVLDDRAAELAARWPEGTRVPTPEFWGGLRIVPDTVEFWQGRADRLHDRLRYRRVSVPADGGGTDSLAVADPDATGVRVGDAGGGDAGGGVPTAAEDLWVVERLAP.

Residues 20–23 (RQGY) and lysine 80 each bind substrate. FMN contacts are provided by residues 75–80 (RTVLLK), 90–91 (YT), arginine 96, lysine 97, and glutamine 119. Positions 137, 141, and 145 each coordinate substrate. Residues 154-155 (QS) and tryptophan 200 contribute to the FMN site. 206–208 (RLH) is a substrate binding site. Arginine 210 contacts FMN.

Belongs to the pyridoxamine 5'-phosphate oxidase family. In terms of assembly, homodimer. Requires FMN as cofactor.

It carries out the reaction pyridoxamine 5'-phosphate + O2 + H2O = pyridoxal 5'-phosphate + H2O2 + NH4(+). The catalysed reaction is pyridoxine 5'-phosphate + O2 = pyridoxal 5'-phosphate + H2O2. The protein operates within cofactor metabolism; pyridoxal 5'-phosphate salvage; pyridoxal 5'-phosphate from pyridoxamine 5'-phosphate: step 1/1. It participates in cofactor metabolism; pyridoxal 5'-phosphate salvage; pyridoxal 5'-phosphate from pyridoxine 5'-phosphate: step 1/1. Functionally, catalyzes the oxidation of either pyridoxine 5'-phosphate (PNP) or pyridoxamine 5'-phosphate (PMP) into pyridoxal 5'-phosphate (PLP). This is Pyridoxine/pyridoxamine 5'-phosphate oxidase from Frankia casuarinae (strain DSM 45818 / CECT 9043 / HFP020203 / CcI3).